Reading from the N-terminus, the 1007-residue chain is Probable inorganic carbon transporter subunit DabA (1007 aa).

Cysteine 442, aspartate 444, histidine 696, and cysteine 711 together coordinate Zn(2+).

Belongs to the inorganic carbon transporter (TC 9.A.2) DabA family. In terms of assembly, forms a complex with DabB. Requires Zn(2+) as cofactor.

The protein localises to the cell inner membrane. Functionally, part of an energy-coupled inorganic carbon pump. The sequence is that of Probable inorganic carbon transporter subunit DabA from Aquifex aeolicus (strain VF5).